The chain runs to 139 residues: Large ribosomal subunit protein uL22 (139 aa).

The segment at 118–139 (VEVESRPKKVASKSKSQKGSAR) is disordered. The span at 125–139 (KKVASKSKSQKGSAR) shows a compositional bias: basic residues.

This sequence belongs to the universal ribosomal protein uL22 family. In terms of assembly, part of the 50S ribosomal subunit.

In terms of biological role, this protein binds specifically to 23S rRNA; its binding is stimulated by other ribosomal proteins, e.g. L4, L17, and L20. It is important during the early stages of 50S assembly. It makes multiple contacts with different domains of the 23S rRNA in the assembled 50S subunit and ribosome. Its function is as follows. The globular domain of the protein is located near the polypeptide exit tunnel on the outside of the subunit, while an extended beta-hairpin is found that lines the wall of the exit tunnel in the center of the 70S ribosome. The protein is Large ribosomal subunit protein uL22 of Saccharopolyspora erythraea (strain ATCC 11635 / DSM 40517 / JCM 4748 / NBRC 13426 / NCIMB 8594 / NRRL 2338).